The following is a 308-amino-acid chain: MIVTGATDLETAAPALSETARAKVNLTLRVVGRRADGFHDLESVVAFADCVDRLTLTQGAELSLVAAGPRAQECGQTADNLVLTAARLLGERIPDLKAGAFALDKYLPVAAGIGGGSADAAAALRLLARANGLSIDDPRLIETARLTGADVPVCVRSESCVMTGVGESLLPLDVPAMPAVLVNPRVPVATKDVFAALGLRKGQLNVGVNDLIEAIVWPEAGAPVDDWLAMLSDGANDLEAPAIRVQPVIGEVLARLRSTGARLSRMSGSGATCFAIFDDEAAAHHAAQTIRLDRPQWWVHVGTLGGGS.

K23 is a catalytic residue. 108 to 118 contributes to the ATP binding site; the sequence is PVAAGIGGGSA. D150 is a catalytic residue.

This sequence belongs to the GHMP kinase family. IspE subfamily.

It carries out the reaction 4-CDP-2-C-methyl-D-erythritol + ATP = 4-CDP-2-C-methyl-D-erythritol 2-phosphate + ADP + H(+). It participates in isoprenoid biosynthesis; isopentenyl diphosphate biosynthesis via DXP pathway; isopentenyl diphosphate from 1-deoxy-D-xylulose 5-phosphate: step 3/6. Catalyzes the phosphorylation of the position 2 hydroxy group of 4-diphosphocytidyl-2C-methyl-D-erythritol. This chain is 4-diphosphocytidyl-2-C-methyl-D-erythritol kinase, found in Nitrobacter winogradskyi (strain ATCC 25391 / DSM 10237 / CIP 104748 / NCIMB 11846 / Nb-255).